Consider the following 223-residue polypeptide: Urease accessory protein UreG (223 aa).

The segment at 1-31 (MAKHSHDHTHDHHDRPRRVRKPGEPLRIGVG) is disordered. GTP is bound at residue 32–39 (GPVGSGKT).

Belongs to the SIMIBI class G3E GTPase family. UreG subfamily. Homodimer. UreD, UreF and UreG form a complex that acts as a GTP-hydrolysis-dependent molecular chaperone, activating the urease apoprotein by helping to assemble the nickel containing metallocenter of UreC. The UreE protein probably delivers the nickel.

It localises to the cytoplasm. Functionally, facilitates the functional incorporation of the urease nickel metallocenter. This process requires GTP hydrolysis, probably effectuated by UreG. The polypeptide is Urease accessory protein UreG (Mycobacterium marinum (strain ATCC BAA-535 / M)).